We begin with the raw amino-acid sequence, 596 residues long: Sensor protein ChvG (596 aa).

The interval 1–22 (MLKKTPETVSDSDDAEERGSER) is disordered. At 1–47 (MLKKTPETVSDSDDAEERGSERRHRIHPLTIIRRIFGNAVFSSLTRR) the chain is on the cytoplasmic side. Residues 48 to 68 (ILFFNVAATVVLVGGILYLNQ) traverse the membrane as a helical segment. The Periplasmic portion of the chain corresponds to 69-283 (FREGLIDARV…VHAERLAIMR (215 aa)). The chain crosses the membrane as a helical span at residues 284–304 (VFGIATLVNIVLSLLLSSTIA). An HAMP domain is found at 301–356 (STIATPLRRLSAAAIRVRRGARTREEIPDFSARQDEIGNLSIALREMTTALYDRID). Residues 305-596 (TPLRRLSAAA…SLPAAETHER (292 aa)) are Cytoplasmic-facing. Positions 364-592 (DVSHELKNPL…RFTLSLPAAE (229 aa)) constitute a Histidine kinase domain. His367 carries the post-translational modification Phosphohistidine.

It localises to the cell inner membrane. The catalysed reaction is ATP + protein L-histidine = ADP + protein N-phospho-L-histidine.. In terms of biological role, member of a two-component regulatory system ChvG/ChvI. Activates ChvI by phosphorylation (Potential). The protein is Sensor protein ChvG (chvG) of Agrobacterium fabrum (strain C58 / ATCC 33970) (Agrobacterium tumefaciens (strain C58)).